Reading from the N-terminus, the 102-residue chain is Small ribosomal subunit protein uS10 (102 aa).

This sequence belongs to the universal ribosomal protein uS10 family. In terms of assembly, part of the 30S ribosomal subunit.

In terms of biological role, involved in the binding of tRNA to the ribosomes. This chain is Small ribosomal subunit protein uS10, found in Treponema pallidum (strain Nichols).